A 562-amino-acid polypeptide reads, in one-letter code: Protoporphyrinogen oxidase 1, chloroplastic (562 aa).

The N-terminal 48 residues, 1–48, are a transit peptide targeting the chloroplast; it reads MSAMALSSTMALSLPQSSMSLSHCRHNRITILIPSSSLRRRGGSSIRC. FAD contacts are provided by residues 88-93, 115-116, and 137-140; these read GGGISG, EA, and GPNS. A disordered region spans residues 274 to 302; it reads TLKTIQERKDNPKPPRDPRLPKPKGQTVG. Positions 278-293 are enriched in basic and acidic residues; the sequence is IQERKDNPKPPRDPRL. FAD contacts are provided by residues valine 323 and 536 to 538; that span reads VAL.

It belongs to the protoporphyrinogen/coproporphyrinogen oxidase family. Protoporphyrinogen oxidase subfamily. FAD is required as a cofactor.

It localises to the plastid. The protein localises to the chloroplast thylakoid membrane. The protein resides in the chloroplast inner membrane. The catalysed reaction is protoporphyrinogen IX + 3 O2 = protoporphyrin IX + 3 H2O2. The protein operates within porphyrin-containing compound metabolism; protoporphyrin-IX biosynthesis; protoporphyrin-IX from protoporphyrinogen-IX: step 1/1. It functions in the pathway porphyrin-containing compound metabolism; chlorophyll biosynthesis. Catalyzes the 6-electron oxidation of protoporphyrinogen-IX to form protoporphyrin-IX. The polypeptide is Protoporphyrinogen oxidase 1, chloroplastic (Spinacia oleracea (Spinach)).